Consider the following 159-residue polypeptide: Small ribosomal subunit protein uS9 (159 aa).

The protein belongs to the universal ribosomal protein uS9 family.

The sequence is that of Small ribosomal subunit protein uS9 from Beijerinckia indica subsp. indica (strain ATCC 9039 / DSM 1715 / NCIMB 8712).